The chain runs to 209 residues: NADH-ubiquinone oxidoreductase subunit 9 (209 aa).

It belongs to the complex I 30 kDa subunit family. Complex I is composed of about 30 different subunits.

The protein localises to the mitochondrion inner membrane. It catalyses the reaction a ubiquinone + NADH + 5 H(+)(in) = a ubiquinol + NAD(+) + 4 H(+)(out). Functionally, core subunit of the mitochondrial membrane respiratory chain NADH dehydrogenase (Complex I) that is believed to belong to the minimal assembly required for catalysis. Complex I functions in the transfer of electrons from NADH to the respiratory chain. The immediate electron acceptor for the enzyme is believed to be ubiquinone. This Paramecium tetraurelia protein is NADH-ubiquinone oxidoreductase subunit 9 (NAD9).